A 141-amino-acid chain; its full sequence is High mobility group B protein 3 (141 aa).

2 stretches are compositionally biased toward basic and acidic residues: residues 1 to 12 (MKGAKSKAETRS) and 70 to 110 (GGEK…LEEG). Disordered stretches follow at residues 1 to 40 (MKGAKSKAETRSTKLSVTKKPAKGAKGAAKDPNKPKRPSS) and 54 to 141 (KEEH…EDDD). Residues 35 to 104 (PKRPSSAFFV…EYEKNMKAYN (70 aa)) constitute a DNA-binding region (HMG box). Position 122 is a phosphoserine (Ser122). Residues 124–141 (VNDEDDAEDGSEEEEDDD) show a composition bias toward acidic residues.

The protein belongs to the HMGB family. In terms of tissue distribution, expressed in lateral roots, root tips, stems, cotyledons, leaves and flowers (excluding ovary and pedicels).

It is found in the nucleus. The protein localises to the cytoplasm. It localises to the cytosol. Functionally, binds preferentially double-stranded DNA. The chain is High mobility group B protein 3 (HMGB3) from Arabidopsis thaliana (Mouse-ear cress).